Here is a 777-residue protein sequence, read N- to C-terminus: MSEQQVHSVTVELAGRPLTIEAGRVAQLANGAVLVRYGDTVLLAAVTASAEPRDGIDFFPLTVDYEEKMYAAGKIPGSFFKREGRPTETAILTSRLTDRPLRPLFPKGYYNDVQVSITTLSTDQVNDPGPLAIIGASAALVISDIPFAAPVGAVQMGHIDGVFAVNPVMGLMENSRLDLVVAGTSEAVMMVEASAYELTEAEMLEAVKRGHEAMQAVIQAQLELAEKCGKPKKEFVAPVVDTSLQDEIKAWMGNRFLQALNNSDKAAREAATDSLRTDVLEQFSAGVAEEELAARVKAVTKNYDALVKDEVRASILEQGIRVDGRKVNEIRPIAVDVGVLPRVHGSGLFTRGQTQVLTVATLGSPGDEQRLDDLGIETTRHYMHHYNFPAFSTGEARPSRGPRRRDIGHGKLAERALVPVLPEKDKFPYTMRLVSEVLASNGSSSMASVCGSSLALMDAGVPIKAPVAGVAMGLITGKEAGQFSVLTDIQGLEDALGDMDFKVAGTTAGITALQMDIKTTGITYEIMQQAFEQARQGRVFILDKMNEIINTARNDISQFAPRIITLQIDPSKIGALIGPGGKTIRSIIEQTGAQIDVEDDGRVFVTTPDADGARMAQSLIEGLTREAKVGEIFTGKVVRIMPYGAFVNVLPGKDGMVHVSELDEKRVENVEDVVKIGDELTVMVIDVEPGTGKLSLSRRAILTGETAEQRKSSSSKGGPRGGGGGGDRGPRPGGDRGPRPEGDRGPRPEGDRPREGGDRGPRPGNGGNDRRGGGFRG.

The Mg(2+) site is built by Asp494 and Asp500. Residues 561 to 620 (PRIITLQIDPSKIGALIGPGGKTIRSIIEQTGAQIDVEDDGRVFVTTPDADGARMAQSLI) form the KH domain. Residues 630–699 (GEIFTGKVVR…GTGKLSLSRR (70 aa)) form the S1 motif domain. A disordered region spans residues 703–777 (TGETAEQRKS…NDRRGGGFRG (75 aa)). Over residues 718 to 727 (GPRGGGGGGD) the composition is skewed to gly residues. 2 stretches are compositionally biased toward basic and acidic residues: residues 728–761 (RGPR…DRGP) and 768–777 (NDRRGGGFRG).

The protein belongs to the polyribonucleotide nucleotidyltransferase family. The cofactor is Mg(2+).

The protein resides in the cytoplasm. The enzyme catalyses RNA(n+1) + phosphate = RNA(n) + a ribonucleoside 5'-diphosphate. In terms of biological role, involved in mRNA degradation. Catalyzes the phosphorolysis of single-stranded polyribonucleotides processively in the 3'- to 5'-direction. This chain is Polyribonucleotide nucleotidyltransferase, found in Herpetosiphon aurantiacus (strain ATCC 23779 / DSM 785 / 114-95).